Here is a 1488-residue protein sequence, read N- to C-terminus: Phenolphthiocerol/phthiocerol polyketide synthase subunit E (1488 aa).

One can recognise a Ketosynthase family 3 (KS3) domain in the interval 5–438 (ENAIAVVGMA…GTNAHVVLEE (434 aa)). Active-site for beta-ketoacyl synthase activity residues include Cys-184, His-320, and His-361. An acyltransferase region spans residues 551 to 868 (VFLFPGQGAQ…GELWSAGVEV (318 aa)). Catalysis depends on Ser-641, which acts as the For malonyltransferase activity. Positions 930-1004 (NGESQTEVTL…SLTAAVDASF (75 aa)) constitute a Carrier domain. Ser-965 carries the post-translational modification O-(pantetheine 4'-phosphoryl)serine. 1286 to 1331 (EGVVAVELEGEGRSVLRPDVDLRRTVGWFTTYYPVPLACATGLGAL) serves as a coordination point for NADP(+).

Requires NADP(+) as cofactor. Pantetheine 4'-phosphate serves as cofactor.

The enzyme catalyses icosanoyl-[(phenol)carboxyphthiodiolenone synthase] + 2 (S)-methylmalonyl-CoA + 3 malonyl-CoA + 5 NADPH + 10 H(+) = C32-carboxyphthiodiolenone-[(phenol)carboxyphthiodiolenone synthase] + 5 CO2 + 5 NADP(+) + 5 CoA + 2 H2O. It catalyses the reaction docosanoyl-[(phenol)carboxyphthiodiolenone synthase] + 2 (S)-methylmalonyl-CoA + 3 malonyl-CoA + 5 NADPH + 10 H(+) = C34-carboxyphthiodiolenone-[(phenol)carboxyphthiodiolenone synthase] + 5 CO2 + 5 NADP(+) + 5 CoA + 2 H2O. The catalysed reaction is 17-(4-hydroxyphenyl)heptadecanoyl-[(phenol)carboxyphthiodiolenone synthase] + 2 (S)-methylmalonyl-CoA + 3 malonyl-CoA + 5 NADPH + 10 H(+) = C35-(phenol)carboxyphthiodiolenone-[(phenol)carboxyphthiodiolenone synthase] + 5 CO2 + 5 NADP(+) + 5 CoA + 2 H2O. It carries out the reaction 19-(4-hydroxyphenyl)nonadecanoyl-[(phenol)carboxyphthiodiolenone synthase] + 2 (S)-methylmalonyl-CoA + 3 malonyl-CoA + 5 NADPH + 10 H(+) = C37-(phenol)carboxyphthiodiolenone-[(phenol)carboxyphthiodiolenone synthase] + 5 CO2 + 5 NADP(+) + 5 CoA + 2 H2O. Its pathway is lipid metabolism; fatty acid biosynthesis. In terms of biological role, part of the PpsABCDE complex involved in the biosynthesis of the lipid core common to phthiocerols and phenolphthiocerols by successive additions of malonyl-CoA or methylmalonyl-CoA extender units. PpsA can accept as substrate the activated forms of either icosanoyl (C20), docosanoyl (C22) or lignoceroyl (C24) groups from FadD26, or a (4-hydroxyphenyl)-C17 or (4-hydroxyphenyl)-C19 fatty acyl from FadD29. PpsA initiates the biosynthesis and extends its substrate using a malonyl-CoA extender unit. The PpsB and PpsC proteins add the second and third malonyl-CoA extender units. PpsD adds an (R)-methylmalonyl unit and PpsE adds a second (R)-methylmalonyl unit. The incorporation of the methylmalonyl units results in formation of two branched methyl groups in the elongated product. This chain is Phenolphthiocerol/phthiocerol polyketide synthase subunit E (ppsE), found in Mycobacterium bovis (strain ATCC BAA-935 / AF2122/97).